Reading from the N-terminus, the 202-residue chain is MNSAIEEQLATNLYYDRNFDCETAKILPGEYYFTAKPMLIVTVLGSCVAACIRDRVSGIGGMNHFMLPDGGGDPGNPLSASMRYGAYAMEVLINQLLKAGARRENLEAKVFGGGNVLRGFTTMNVGERNAQFVRDFLRAENIRVVAEDLNDVHPRKVYFFPRTGRVLVKKLKQLNNYTLVKREQDYASRLKSNVVAGEVDLF.

This sequence belongs to the CheD family.

It catalyses the reaction L-glutaminyl-[protein] + H2O = L-glutamyl-[protein] + NH4(+). Probably deamidates glutamine residues to glutamate on methyl-accepting chemotaxis receptors (MCPs), playing an important role in chemotaxis. In Thiobacillus denitrificans (strain ATCC 25259 / T1), this protein is Probable chemoreceptor glutamine deamidase CheD.